Reading from the N-terminus, the 457-residue chain is Bifunctional protein GlmU (457 aa).

A pyrophosphorylase region spans residues 1-230; the sequence is MSKRYAVVLA…FEESLGVNDR (230 aa). UDP-N-acetyl-alpha-D-glucosamine-binding positions include 9–12, Lys-23, Gln-73, and 78–79; these read LAAG and GT. Position 103 (Asp-103) interacts with Mg(2+). UDP-N-acetyl-alpha-D-glucosamine-binding residues include Gly-140, Glu-155, Asn-170, and Asn-228. Mg(2+) is bound at residue Asn-228. Residues 231-251 form a linker region; that stretch reads IALAEASRLMQRRINENHMRN. The segment at 252–457 is N-acetyltransferase; it reads GVTLVNPENT…GYAKHLNHGK (206 aa). Residues Arg-333 and Lys-351 each coordinate UDP-N-acetyl-alpha-D-glucosamine. Residue His-363 is the Proton acceptor of the active site. Residues Tyr-366 and Asn-377 each contribute to the UDP-N-acetyl-alpha-D-glucosamine site. Acetyl-CoA contacts are provided by residues 386–387, Ala-423, and Arg-440; that span reads NY.

This sequence in the N-terminal section; belongs to the N-acetylglucosamine-1-phosphate uridyltransferase family. It in the C-terminal section; belongs to the transferase hexapeptide repeat family. In terms of assembly, homotrimer. Mg(2+) is required as a cofactor.

Its subcellular location is the cytoplasm. The catalysed reaction is alpha-D-glucosamine 1-phosphate + acetyl-CoA = N-acetyl-alpha-D-glucosamine 1-phosphate + CoA + H(+). The enzyme catalyses N-acetyl-alpha-D-glucosamine 1-phosphate + UTP + H(+) = UDP-N-acetyl-alpha-D-glucosamine + diphosphate. It participates in nucleotide-sugar biosynthesis; UDP-N-acetyl-alpha-D-glucosamine biosynthesis; N-acetyl-alpha-D-glucosamine 1-phosphate from alpha-D-glucosamine 6-phosphate (route II): step 2/2. It functions in the pathway nucleotide-sugar biosynthesis; UDP-N-acetyl-alpha-D-glucosamine biosynthesis; UDP-N-acetyl-alpha-D-glucosamine from N-acetyl-alpha-D-glucosamine 1-phosphate: step 1/1. Its pathway is bacterial outer membrane biogenesis; LPS lipid A biosynthesis. In terms of biological role, catalyzes the last two sequential reactions in the de novo biosynthetic pathway for UDP-N-acetylglucosamine (UDP-GlcNAc). The C-terminal domain catalyzes the transfer of acetyl group from acetyl coenzyme A to glucosamine-1-phosphate (GlcN-1-P) to produce N-acetylglucosamine-1-phosphate (GlcNAc-1-P), which is converted into UDP-GlcNAc by the transfer of uridine 5-monophosphate (from uridine 5-triphosphate), a reaction catalyzed by the N-terminal domain. This is Bifunctional protein GlmU from Listeria monocytogenes serotype 4b (strain F2365).